The chain runs to 541 residues: Chaperonin GroEL (541 aa).

ATP contacts are provided by residues 29-32 (TLGP), 86-90 (DGTTT), Gly-413, 477-479 (DAL), and Asp-493.

This sequence belongs to the chaperonin (HSP60) family. In terms of assembly, forms a cylinder of 14 subunits composed of two heptameric rings stacked back-to-back. Interacts with the co-chaperonin GroES.

The protein resides in the cytoplasm. The enzyme catalyses ATP + H2O + a folded polypeptide = ADP + phosphate + an unfolded polypeptide.. Its function is as follows. Together with its co-chaperonin GroES, plays an essential role in assisting protein folding. The GroEL-GroES system forms a nano-cage that allows encapsulation of the non-native substrate proteins and provides a physical environment optimized to promote and accelerate protein folding. The chain is Chaperonin GroEL from Clostridium botulinum (strain ATCC 19397 / Type A).